The primary structure comprises 419 residues: MECNAKPPFQWELENLISFGTSTAEVPRKLKPMEWEIDGFDCTSLYSSSFAYAGSSGSDIAHAFSKSSKSTSISSSSAEVRTHNFTSETGESLPGEFAKGIDTSPSLELSFGSGDPVLGLKLGKRTYFEDFWEVENAKGLGLPVTLASSSVSPVKKSKSIPQRLQTPHCQVEGCNLDLSSAKDYHRKHRICENHSKFPKVVVSGVERRFCQQCSRFHCLSEFDEKKRSCRRRLSDHNARRRKPNPGRTYDGKPQVDFVWNRFALIHPRSEEKFIWPSSKHVPSRVLMPQPAKTEISDTEHNRFGLLDPKTKTARAELFSKEKVTISSHMGASQDLDGALSLLSNSTTWVSSSDQPRRFTLDHHPSSNLQPVAHRSAAQLNSVSGYWQPDPPAVEGPTALHRNGVGQFNENYFSLNQFYN.

The disordered stretch occupies residues 77–96; that stretch reads SAEVRTHNFTSETGESLPGE. The segment at 166–243 adopts an SBP-type zinc-finger fold; the sequence is TPHCQVEGCN…SDHNARRRKP (78 aa). Positions 169, 174, 191, 194, 210, 213, 217, and 229 each coordinate Zn(2+). The Bipartite nuclear localization signal motif lies at 226-242; it reads KRSCRRRLSDHNARRRK. Positions 230 to 249 are disordered; sequence RRRLSDHNARRRKPNPGRTY.

Requires Zn(2+) as cofactor.

The protein resides in the nucleus. Functionally, trans-acting factor that binds specifically to the consensus nucleotide sequence 5'-TNCGTACAA-3'. The sequence is that of Squamosa promoter-binding-like protein 2 (SPL2) from Arabidopsis thaliana (Mouse-ear cress).